The chain runs to 254 residues: Alcohol dehydrogenase (254 aa).

10–33 provides a ligand contact to NAD(+); that stretch reads FVAGLGGIGLDTSREIVKSGPKNL. A substrate-binding site is contributed by S138. Catalysis depends on Y151, which acts as the Proton acceptor.

This sequence belongs to the short-chain dehydrogenases/reductases (SDR) family. Homodimer.

It carries out the reaction a primary alcohol + NAD(+) = an aldehyde + NADH + H(+). The enzyme catalyses a secondary alcohol + NAD(+) = a ketone + NADH + H(+). The sequence is that of Alcohol dehydrogenase (Adh) from Drosophila borealis (Fruit fly).